Reading from the N-terminus, the 172-residue chain is NAD(P)H-quinone oxidoreductase subunit I, chloroplastic (172 aa).

2 consecutive 4Fe-4S ferredoxin-type domains span residues 55-84 (GRIH…VDWK) and 95-124 (LNYS…MTEE). [4Fe-4S] cluster contacts are provided by cysteine 64, cysteine 67, cysteine 70, cysteine 74, cysteine 104, cysteine 107, cysteine 110, and cysteine 114.

The protein belongs to the complex I 23 kDa subunit family. As to quaternary structure, NDH is composed of at least 16 different subunits, 5 of which are encoded in the nucleus. It depends on [4Fe-4S] cluster as a cofactor.

It localises to the plastid. The protein localises to the chloroplast thylakoid membrane. The enzyme catalyses a plastoquinone + NADH + (n+1) H(+)(in) = a plastoquinol + NAD(+) + n H(+)(out). The catalysed reaction is a plastoquinone + NADPH + (n+1) H(+)(in) = a plastoquinol + NADP(+) + n H(+)(out). Functionally, NDH shuttles electrons from NAD(P)H:plastoquinone, via FMN and iron-sulfur (Fe-S) centers, to quinones in the photosynthetic chain and possibly in a chloroplast respiratory chain. The immediate electron acceptor for the enzyme in this species is believed to be plastoquinone. Couples the redox reaction to proton translocation, and thus conserves the redox energy in a proton gradient. This is NAD(P)H-quinone oxidoreductase subunit I, chloroplastic from Capsella bursa-pastoris (Shepherd's purse).